Here is a 323-residue protein sequence, read N- to C-terminus: Synaptonemal complex central element protein 1 (323 aa).

Over residues 1–10 (MAGRPGSSNA) the composition is skewed to polar residues. Disordered stretches follow at residues 1 to 31 (MAGRPGSSNAEAAGAVGPTDEARGQAESSQK) and 294 to 323 (KQEEEAGLGEAANPKPLGVSEEKDQEPSTK). Composition is skewed to basic and acidic residues over residues 20-31 (DEARGQAESSQK) and 313-323 (SEEKDQEPSTK). Residues 25-290 (QAESSQKIED…EKLGVQVLAQ (266 aa)) adopt a coiled-coil conformation.

The protein belongs to the SYCE family. Homodimer. Found in a complex with SYCP1 and SYCE2. Interacts with SYCP1, SYCE2 and SYCE3. Interacts with SIX6OS1.

The protein localises to the nucleus. Its subcellular location is the chromosome. Functionally, major component of the transverse central element of synaptonemal complexes (SCS), formed between homologous chromosomes during meiotic prophase. Requires SYCP1 in order to be incorporated into the central element. May have a role in the synaptonemal complex assembly, stabilization and recombination. This Bos taurus (Bovine) protein is Synaptonemal complex central element protein 1 (SYCE1).